A 962-amino-acid chain; its full sequence is Protease 3 (962 aa).

A signal peptide spans 1 to 23; it reads MPRSTWFKALLLLVALWGPAVQA. Position 88 (His88) interacts with Zn(2+). Catalysis depends on Glu91, which acts as the Proton acceptor. Zn(2+) is bound by residues His92 and Glu169.

The protein belongs to the peptidase M16 family. Monomer. Requires Zn(2+) as cofactor.

The protein localises to the periplasm. The catalysed reaction is Preferential cleavage of 16-Tyr-|-Leu-17 and 25-Phe-|-Tyr-26 bonds of oxidized insulin B chain. Also acts on other substrates of Mw less than 7 kDa such as insulin and glucagon.. Functionally, endopeptidase that degrades small peptides of less than 7 kDa, such as glucagon and insulin. This chain is Protease 3 (ptrA), found in Salmonella typhi.